Reading from the N-terminus, the 236-residue chain is Glycosylphosphatidylinositol anchor biosynthesis protein 11 (236 aa).

A run of 2 helical transmembrane segments spans residues 40–60 (TLTI…FGLT) and 65–85 (GVML…GYLI). N-linked (GlcNAc...) asparagine glycosylation is present at Asn-99. 4 consecutive transmembrane segments (helical) span residues 107 to 127 (LLAG…VALI), 139 to 159 (ETYL…LVLY), 184 to 204 (ILLS…PIPL), and 215 to 235 (ITLL…CFLF).

This sequence belongs to the PIGF family.

It is found in the endoplasmic reticulum membrane. The protein operates within glycolipid biosynthesis; glycosylphosphatidylinositol-anchor biosynthesis. In terms of biological role, acts in the GPI biosynthetic pathway between GlcNAc-PI synthesis and GPI transfer to protein. This Debaryomyces hansenii (strain ATCC 36239 / CBS 767 / BCRC 21394 / JCM 1990 / NBRC 0083 / IGC 2968) (Yeast) protein is Glycosylphosphatidylinositol anchor biosynthesis protein 11 (GPI11).